Here is a 212-residue protein sequence, read N- to C-terminus: Stage 0 sporulation protein A (212 aa).

The 119-residue stretch at 5–123 (EVLLADDNRE…VLAQRIRQII (119 aa)) folds into the Response regulatory domain. Ca(2+) is bound by residues Asp10, Asp11, and Asp56. Asp56 bears the 4-aspartylphosphate mark. Positions 194–212 (PDIAKKFNTTASHVERAIR) form a DNA-binding region, H-T-H motif.

Ca(2+) serves as cofactor. Post-translationally, phosphorylated by KinA and KinB.

The protein resides in the cytoplasm. Functionally, may play the central regulatory role in sporulation. It may be an element of the effector pathway responsible for the activation of sporulation genes in response to nutritional stress. Spo0A may act in concert with Spo0H (a sigma factor) to control the expression of some genes that are critical to the sporulation process. Repressor of abrB, activator of the spoIIa operon. Binds the DNA sequence 5'-TGNCGAA-3' (0A box). This Brevibacillus parabrevis protein is Stage 0 sporulation protein A (spo0A).